The following is a 389-amino-acid chain: Migration and invasion-inhibitory protein (389 aa).

Positions L44 to E54 are enriched in low complexity. Disordered stretches follow at residues L44–L80 and K131–P150. The span at S58–S70 shows a compositional bias: polar residues. A compositionally biased stretch (basic and acidic residues) spans Q71–L80. At S309 the chain carries Phosphoserine.

In terms of assembly, interacts with IGFBP2.

Inhibits glioma cells invasion and down-regulates adhesion- and motility-associated genes such as NFKB2 and ICAM1. Exhibits opposing effects to IGFBP2 on cell invasion. The sequence is that of Migration and invasion-inhibitory protein (Miip) from Rattus norvegicus (Rat).